We begin with the raw amino-acid sequence, 382 residues long: MTANLLDYDLEGLAAFCEGLGEKRFRATQLFRWIHQKGASDFGQMTDLARSLREKLAGSAHIQGPKVVSRHDSADGTIKWLFDVGAGDVIEAVFIPETDRGTLCISSQAGCAVGCRFCSTGHQGFSRNLTTGEIVSQLWFAEHFLRQHLGRQERVISNVVMMGMGEPLQNYSQLVPALRVMLDDHGYGLSRRRVTVSTSGVVPMIDRLAKDCPVALAVSLHAPQDALRDSLVPLNKKYPIAELLQACTRYQASAPRDFITFEYCMLDGVNDQPEHARQLVALMQNHSAGGLSCKFNLIPFNPFPASGLKRSAMPQVAAFAKILMDAGIVTTVRKTRGDDIDAACGQLAGDVQDRTSVDRRIAAQRQGMLGGIKVVVAKGMDV.

Glu-91 serves as the catalytic Proton acceptor. A Radical SAM core domain is found at 97-339 (ETDRGTLCIS…TTVRKTRGDD (243 aa)). Residues Cys-104 and Cys-344 are joined by a disulfide bond. [4Fe-4S] cluster is bound by residues Cys-111, Cys-115, and Cys-118. Residues 165-166 (GE), Ser-197, 219-221 (SLH), and Asn-301 contribute to the S-adenosyl-L-methionine site. The active-site S-methylcysteine intermediate is Cys-344.

This sequence belongs to the radical SAM superfamily. RlmN family. The cofactor is [4Fe-4S] cluster.

Its subcellular location is the cytoplasm. The catalysed reaction is adenosine(2503) in 23S rRNA + 2 reduced [2Fe-2S]-[ferredoxin] + 2 S-adenosyl-L-methionine = 2-methyladenosine(2503) in 23S rRNA + 5'-deoxyadenosine + L-methionine + 2 oxidized [2Fe-2S]-[ferredoxin] + S-adenosyl-L-homocysteine. It carries out the reaction adenosine(37) in tRNA + 2 reduced [2Fe-2S]-[ferredoxin] + 2 S-adenosyl-L-methionine = 2-methyladenosine(37) in tRNA + 5'-deoxyadenosine + L-methionine + 2 oxidized [2Fe-2S]-[ferredoxin] + S-adenosyl-L-homocysteine. Its function is as follows. Specifically methylates position 2 of adenine 2503 in 23S rRNA and position 2 of adenine 37 in tRNAs. m2A2503 modification seems to play a crucial role in the proofreading step occurring at the peptidyl transferase center and thus would serve to optimize ribosomal fidelity. This is Dual-specificity RNA methyltransferase RlmN from Polaromonas sp. (strain JS666 / ATCC BAA-500).